Reading from the N-terminus, the 732-residue chain is Catalase-peroxidase (732 aa).

Positions 1-10 are enriched in basic and acidic residues; the sequence is MDAKTDDKAG. The tract at residues 1–26 is disordered; it reads MDAKTDDKAGKCPVAHGPAPRGNRDW. The segment at residues 95-217 is a cross-link (tryptophyl-tyrosyl-methioninium (Trp-Tyr) (with M-243)); it reads WHSAGTYRTT…LGAVQMGLIY (123 aa). The active-site Proton acceptor is the His-96. Residues 217-243 constitute a cross-link (tryptophyl-tyrosyl-methioninium (Tyr-Met) (with W-95)); that stretch reads YVNPEGPNGNPDPLGSAKDIRETFARM. His-258 contacts heme b.

Belongs to the peroxidase family. Peroxidase/catalase subfamily. As to quaternary structure, homodimer or homotetramer. The cofactor is heme b. Formation of the three residue Trp-Tyr-Met cross-link is important for the catalase, but not the peroxidase activity of the enzyme.

The catalysed reaction is H2O2 + AH2 = A + 2 H2O. The enzyme catalyses 2 H2O2 = O2 + 2 H2O. Its function is as follows. Bifunctional enzyme with both catalase and broad-spectrum peroxidase activity. This chain is Catalase-peroxidase, found in Rhodopseudomonas palustris (strain BisB18).